Consider the following 31-residue polypeptide: Cytochrome b6-f complex subunit 8 (31 aa).

A helical transmembrane segment spans residues 5 to 25 (IVSLAWAALMVVFTFSLSLVV).

This sequence belongs to the PetN family. As to quaternary structure, the 4 large subunits of the cytochrome b6-f complex are cytochrome b6, subunit IV (17 kDa polypeptide, PetD), cytochrome f and the Rieske protein, while the 4 small subunits are PetG, PetL, PetM and PetN. The complex functions as a dimer.

The protein resides in the plastid. It is found in the chloroplast thylakoid membrane. In terms of biological role, component of the cytochrome b6-f complex, which mediates electron transfer between photosystem II (PSII) and photosystem I (PSI), cyclic electron flow around PSI, and state transitions. This chain is Cytochrome b6-f complex subunit 8, found in Acorus calamus (Sweet flag).